Consider the following 252-residue polypeptide: 14-3-3 protein 10 (252 aa).

The protein belongs to the 14-3-3 family. In terms of assembly, homodimer.

This chain is 14-3-3 protein 10 (TFT10), found in Solanum lycopersicum (Tomato).